Reading from the N-terminus, the 443-residue chain is ATP-dependent protease ATPase subunit HslU (443 aa).

Residues Ile-18, 60–65 (GVGKTE), Asp-256, Glu-321, and Arg-393 each bind ATP.

This sequence belongs to the ClpX chaperone family. HslU subfamily. In terms of assembly, a double ring-shaped homohexamer of HslV is capped on each side by a ring-shaped HslU homohexamer. The assembly of the HslU/HslV complex is dependent on binding of ATP.

Its subcellular location is the cytoplasm. In terms of biological role, ATPase subunit of a proteasome-like degradation complex; this subunit has chaperone activity. The binding of ATP and its subsequent hydrolysis by HslU are essential for unfolding of protein substrates subsequently hydrolyzed by HslV. HslU recognizes the N-terminal part of its protein substrates and unfolds these before they are guided to HslV for hydrolysis. The polypeptide is ATP-dependent protease ATPase subunit HslU (Histophilus somni (strain 2336) (Haemophilus somnus)).